Here is a 290-residue protein sequence, read N- to C-terminus: Small ribosomal subunit protein uS2 (290 aa).

This sequence belongs to the universal ribosomal protein uS2 family. As to quaternary structure, component of the small ribosomal subunit. Mature ribosomes consist of a small (40S) and a large (60S) subunit. The 40S subunit contains about 33 different proteins and 1 molecule of RNA (18S). The 60S subunit contains about 49 different proteins and 3 molecules of RNA (28S, 5.8S and 5S). Interacts with ribosomal protein S21.

The protein localises to the cytoplasm. In terms of biological role, required for the assembly and/or stability of the 40S ribosomal subunit. Required for the processing of the 20S rRNA-precursor to mature 18S rRNA in a late step of the maturation of 40S ribosomal subunits. This chain is Small ribosomal subunit protein uS2, found in Culex quinquefasciatus (Southern house mosquito).